A 703-amino-acid chain; its full sequence is Neoverrucotoxin subunit alpha (703 aa).

Position 2 is an N-acetylserine (Ser-2). The 196-residue stretch at 508-703 folds into the B30.2/SPRY domain; sequence PRMPFVQGYK…RFDHGTVRLL (196 aa).

The protein belongs to the SNTX/VTX toxin family. Heterodimer of alpha and beta subunits. Post-translationally, not glycosylated. Four intrachain disulfide linkages are present in the heterodimer. No interchain disulfide bound links the two subunits. In terms of tissue distribution, expressed by the venom gland.

The protein resides in the secreted. Its function is as follows. Has hemolytic and lethal activities. Its hemolytic activity is inhibited by anionic lipids, especially potently by cardiolipin. The chain is Neoverrucotoxin subunit alpha from Synanceia verrucosa (Reef stonefish).